We begin with the raw amino-acid sequence, 434 residues long: MLTRKTFHAFRSISGPPKKSVELPKYDLVIVGGGIVGCATARQLLIEKPNLKIALVEKEKELAVHQSGHNSGVIHAGIYYTPGSLKAKLCVEGLDLSYEFFDKEKIPYKKTGKLIVAVEQEEVPRLDALFARAQTNGCRDIEMIDSKRITDIEPHCKGLKALWSPHTGIVDWGYVTKKFGEDFEKRGGKIYTSYPLEKIEDNLKDSNYPIRVSSDPSYADFETKNLITCAGLQSDRVAALSGCSTDPKIVPFRGEYLLLKPEKRHLVKTNIYPVPDPRFPFLGVHFTPRMNGDIWLGPNAVLAYKREGYSYFSISPSDLLESLSYSGMQKLVKKHFTFGIKELYRGIWIAAQVKQLQRFIPELKYSDVTRGPSGVRAQAMDSAGNLVDDFVFDSGTGKLSSLIMHVRNAPSPAATSSLAIAKMITSEAITRFKL.

It belongs to the L2HGDH family. The cofactor is FAD.

The protein resides in the mitochondrion. The enzyme catalyses (S)-2-hydroxyglutarate + A = 2-oxoglutarate + AH2. The protein is L-2-hydroxyglutarate dehydrogenase, mitochondrial of Caenorhabditis briggsae.